The sequence spans 650 residues: Tudor domain-containing protein 3 (650 aa).

Residues Thr147–Asn169 are disordered. The region spanning Leu192–Gly232 is the UBA domain. Disordered regions lie at residues Ser233–Thr271, Glu286–Asn406, and His427–Tyr447. 2 stretches are compositionally biased toward basic and acidic residues: residues Thr320 to Lys337 and His366 to Ser388. The span at Pro390 to Asn406 shows a compositional bias: polar residues. In terms of domain architecture, Tudor spans Ser554 to Glu614. The disordered stretch occupies residues Gly616–Asn650. The segment covering Leu622–Pro632 has biased composition (basic and acidic residues).

As to quaternary structure, component of mRNA stress granules.

The protein localises to the cytoplasm. Its subcellular location is the nucleus. Its function is as follows. Scaffolding protein that specifically recognizes and binds dimethylarginine-containing proteins. Plays a role in the regulation of translation of target mRNAs by binding Arg/Gly-rich motifs (GAR) in dimethylarginine-containing proteins. In nucleus, acts as a coactivator: recognizes and binds asymmetric dimethylation on the core histone tails associated with transcriptional activation (H3R17me2a and H4R3me2a) and recruits proteins at these arginine-methylated loci. In cytoplasm, acts as an antiviral factor that participates in the assembly of stress granules together with G3BP1. This chain is Tudor domain-containing protein 3 (tdrd3), found in Xenopus laevis (African clawed frog).